A 276-amino-acid polypeptide reads, in one-letter code: Phosphonates import ATP-binding protein PhnC (276 aa).

The 249-residue stretch at 5–253 (IRVERLNKTF…LLNDLYGADL (249 aa)) folds into the ABC transporter domain. 37-44 (GASGSGKS) contributes to the ATP binding site.

This sequence belongs to the ABC transporter superfamily. Phosphonates importer (TC 3.A.1.9.1) family. In terms of assembly, the complex is composed of two ATP-binding proteins (PhnC), two transmembrane proteins (PhnE) and a solute-binding protein (PhnD).

The protein localises to the cell inner membrane. It carries out the reaction phosphonate(out) + ATP + H2O = phosphonate(in) + ADP + phosphate + H(+). In terms of biological role, part of the ABC transporter complex PhnCDE involved in phosphonates import. Responsible for energy coupling to the transport system. The protein is Phosphonates import ATP-binding protein PhnC of Stutzerimonas stutzeri (Pseudomonas stutzeri).